Here is a 249-residue protein sequence, read N- to C-terminus: Triosephosphate isomerase (249 aa).

Residue 12–14 (NWK) coordinates substrate. H96 functions as the Electrophile in the catalytic mechanism. The active-site Proton acceptor is the E166. Substrate contacts are provided by residues G172, S211, and 232-233 (GG).

The protein belongs to the triosephosphate isomerase family. In terms of assembly, homodimer.

It localises to the cytoplasm. It carries out the reaction D-glyceraldehyde 3-phosphate = dihydroxyacetone phosphate. Its pathway is carbohydrate biosynthesis; gluconeogenesis. The protein operates within carbohydrate degradation; glycolysis; D-glyceraldehyde 3-phosphate from glycerone phosphate: step 1/1. Functionally, involved in the gluconeogenesis. Catalyzes stereospecifically the conversion of dihydroxyacetone phosphate (DHAP) to D-glyceraldehyde-3-phosphate (G3P). The chain is Triosephosphate isomerase from Xanthobacter flavus.